The sequence spans 77 residues: Large ribosomal subunit protein uL24c (77 aa).

It belongs to the universal ribosomal protein uL24 family. As to quaternary structure, part of the 50S ribosomal subunit.

It is found in the plastid. The protein localises to the chloroplast. One of two assembly initiator proteins, it binds directly to the 5'-end of the 23S rRNA, where it nucleates assembly of the 50S subunit. This Trieres chinensis (Marine centric diatom) protein is Large ribosomal subunit protein uL24c (rpl24).